We begin with the raw amino-acid sequence, 1071 residues long: Exportin-1 (1071 aa).

One can recognise an Importin N-terminal domain in the interval 46–112 (AQEVLTHLKE…KKYVVGLIIK (67 aa)). HEAT repeat units follow at residues 217 to 240 (QNAP…PLGY), 241 to 277 (IFET…VSVS), 354 to 472 (MLLV…YVDT), 515 to 553 (RFLV…QYPR), 560 to 597 (KFLK…KCRR), and 602 to 639 (VQVG…AVGY). The interval 327–450 (CTFLKEHGQL…VREFMKDTDS (124 aa)) is necessary for interaction with Ran and nuclear export complex formation. A Phosphoserine modification is found at serine 391. A necessary for interaction with RANBP3 region spans residues 411-481 (TVLSKVRLLM…TEIIMTKKLQ (71 aa)). At lysine 446 the chain carries N6-acetyllysine. Phosphothreonine is present on threonine 448. A Phosphoserine modification is found at serine 450. A Phosphotyrosine modification is found at tyrosine 454. Lysine 693 carries the N6-acetyllysine modification. HEAT repeat units lie at residues 775-813 (NFVP…KLGG), 885-916 (TMRN…SFYQ), 917-954 (TYFC…NLVE), and 1002-1039 (FSLN…EERE). Phosphoserine is present on serine 1031.

Belongs to the exportin family. Found in a U snRNA export complex with PHAX/RNUXA, NCBP1/CBP80, NCBP2/CBP20, RAN, XPO1 and m7G-capped RNA. Component of a nuclear export receptor complex composed of KPNB1, RAN, SNUPN and XPO1. Found in a trimeric export complex with SNUPN, RAN and XPO1. Found in a nuclear export complex with RANBP3 and RAN. Found in a 60S ribosomal subunit export complex with NMD3, RAN, XPO1. Interacts with DDX3X, NMD3, NUP42, NUP88, NUP214, RANBP3 and TERT. Interacts with NEMF (via its N-terminus). Interacts with the monomeric form of BIRC5/survivin deacetylated at 'Lys-129'. Interacts with SERTAD2; the interaction translocates SERTAD2 out of the nucleus. Interacts with ATF2. Interacts with SLC35G1 and STIM1. Interacts with DCAF8. Interacts with DTNBP1 and the interaction translocates DTNBP1 out of the nucleus. Interacts with CPEB3. Interacts with HAX1. Interacts with BOK; translocates to the cytoplasm. Interacts with HSP90AB1. Interacts with LRPPRC; interacts with LRPPRC alone and also when LRPPRC is in complex with EIF4E and with EIF4E sensitivity element (4ESE)-containing mRNAs to form an EIF4E-dependent mRNA export complex.

The protein localises to the cytoplasm. Its subcellular location is the nucleus. It is found in the nucleoplasm. The protein resides in the cajal body. It localises to the nucleolus. Its function is as follows. Mediates the nuclear export of cellular proteins (cargos) bearing a leucine-rich nuclear export signal (NES) and of RNAs. In the nucleus, in association with RANBP3, binds cooperatively to the NES on its target protein and to the GTPase Ran in its active GTP-bound form. Docking of this complex to the nuclear pore complex (NPC) is mediated through binding to nucleoporins. Upon transit of a nuclear export complex into the cytoplasm, disassembling of the complex and hydrolysis of Ran-GTP to Ran-GDP (induced by RANBP1 and RANGAP1, respectively) cause release of the cargo from the export receptor. The directionality of nuclear export is thought to be conferred by an asymmetric distribution of the GTP- and GDP-bound forms of Ran between the cytoplasm and nucleus. Involved in U3 snoRNA transport from Cajal bodies to nucleoli. Binds to late precursor U3 snoRNA bearing a TMG cap. The chain is Exportin-1 (Xpo1) from Mus musculus (Mouse).